The sequence spans 385 residues: Calcium/calmodulin-dependent protein kinase type 1D (385 aa).

Positions 23–279 constitute a Protein kinase domain; that stretch reads FEFKETLGTG…CEQAARHPWI (257 aa). Residues 29–37 and K52 each bind ATP; that span reads LGTGAFSEV. Residue K113 forms a Glycyl lysine isopeptide (Lys-Gly) (interchain with G-Cter in SUMO2) linkage. A Phosphoserine modification is found at S122. D144 functions as the Proton acceptor in the catalytic mechanism. The residue at position 180 (T180) is a Phosphothreonine; by CaMKK1 and CaMKK2. The autoinhibitory domain stretch occupies residues 279-319; that stretch reads IAGDTALSKNIHESVSAQIRKNFAKSKWRQAFNATAVVRHM. The interval 299-320 is calmodulin-binding; the sequence is KNFAKSKWRQAFNATAVVRHMR. The Nuclear export signal motif lies at 318–324; sequence HMRRLQL. The disordered stretch occupies residues 363–385; that stretch reads VAGVGAERRPRPTTVTTGHTGSK. Polar residues predominate over residues 375-385; that stretch reads TTVTTGHTGSK.

Belongs to the protein kinase superfamily. CAMK Ser/Thr protein kinase family. CaMK subfamily. As to expression, expressed ubiquitously with high levels in brain and low levels in kidney. Isoform 2 is highly expressed in brain compared to other tissues. In hematopoietic cell lines predominant expression was detected in T and EC cells.

Its subcellular location is the cytoplasm. The protein resides in the nucleus. The enzyme catalyses L-seryl-[protein] + ATP = O-phospho-L-seryl-[protein] + ADP + H(+). It carries out the reaction L-threonyl-[protein] + ATP = O-phospho-L-threonyl-[protein] + ADP + H(+). Its activity is regulated as follows. Activated by Ca(2+)/calmodulin. Binding of calmodulin results in conformational change that relieves intrasteric autoinhibition and allows phosphorylation of Thr-180 within the activation loop by CaMKK1 or CaMKK2. Phosphorylation of Thr-180 results in several fold increase in total activity. Unlike CaMK4, may be unable to exhibit autonomous activity after Ca(2+)/calmodulin activation. In terms of biological role, calcium/calmodulin-dependent protein kinase that operates in the calcium-triggered CaMKK-CaMK1 signaling cascade and, upon calcium influx, activates CREB-dependent gene transcription, regulates calcium-mediated granulocyte function and respiratory burst and promotes basal dendritic growth of hippocampal neurons. In neutrophil cells, required for cytokine-induced proliferative responses and activation of the respiratory burst. Activates the transcription factor CREB1 in hippocampal neuron nuclei. May play a role in apoptosis of erythroleukemia cells. In vitro, phosphorylates transcription factor CREM isoform Beta. Isoform 1 but not isoform 2 activates CREB1. The chain is Calcium/calmodulin-dependent protein kinase type 1D (Camk1d) from Mus musculus (Mouse).